The following is a 324-amino-acid chain: Probable peptidylglycine alpha-hydroxylating monooxygenase 1 (324 aa).

An N-terminal signal peptide occupies residues 1–22 (MPRFYLLSSCALLAFATSFCNA). Intrachain disulfides connect C41-C85 and C73-C101. 2 residues coordinate Cu cation: H66 and H67. Position 142 (H142) interacts with Cu cation. The N-linked (GlcNAc...) asparagine glycan is linked to N182. 3 residues coordinate Cu cation: H207, H209, and M284. A disulfide bridge links C264 with C285.

It belongs to the copper type II ascorbate-dependent monooxygenase family. Cu(2+) is required as a cofactor.

It is found in the secreted. It carries out the reaction a [peptide]-C-terminal glycine + 2 L-ascorbate + O2 = a [peptide]-C-terminal (2S)-2-hydroxyglycine + 2 monodehydro-L-ascorbate radical + H2O. In terms of biological role, monooxygenase that catalyzes an essential reaction in C-terminal alpha-amidation of peptides. Produces an unstable peptidyl(2-hydroxyglycine) intermediate. C-terminal amidation of peptides such as neuropeptides is essential for full biological activity. This chain is Probable peptidylglycine alpha-hydroxylating monooxygenase 1, found in Caenorhabditis elegans.